Reading from the N-terminus, the 318-residue chain is Methenyltetrahydromethanopterin cyclohydrolase (318 aa).

It belongs to the MCH family.

It is found in the cytoplasm. It catalyses the reaction 5,10-methenyl-5,6,7,8-tetrahydromethanopterin + H2O = N(5)-formyl-5,6,7,8-tetrahydromethanopterin + H(+). The protein operates within one-carbon metabolism; methanogenesis from CO(2); 5,10-methenyl-5,6,7,8-tetrahydromethanopterin from CO(2): step 3/3. In terms of biological role, catalyzes the reversible interconversion of 5-formyl-H(4)MPT to methenyl-H(4)MPT(+). The polypeptide is Methenyltetrahydromethanopterin cyclohydrolase (Methanocella arvoryzae (strain DSM 22066 / NBRC 105507 / MRE50)).